Consider the following 549-residue polypeptide: Carboxylesterase 1C (549 aa).

Residues 1-18 form the signal peptide; it reads MWLCALVWASLAVCPIWG. An N-linked (GlcNAc...) asparagine glycan is attached at asparagine 79. Residues cysteine 87 and cysteine 116 are joined by a disulfide bond. The active-site Acyl-ester intermediate is serine 221. A disulfide bridge links cysteine 273 with cysteine 284. N-linked (GlcNAc...) asparagine glycosylation is found at asparagine 274, asparagine 275, and asparagine 302. Residue glutamate 340 is the Charge relay system of the active site. Residue asparagine 375 is glycosylated (N-linked (GlcNAc...) asparagine). Histidine 453 functions as the Charge relay system in the catalytic mechanism. Phosphoserine is present on serine 471. Asparagine 476 carries an N-linked (GlcNAc...) asparagine glycan. The Prevents secretion from ER motif lies at 546–549; that stretch reads TEHT.

This sequence belongs to the type-B carboxylesterase/lipase family.

The protein resides in the endoplasmic reticulum lumen. The catalysed reaction is a carboxylic ester + H2O = an alcohol + a carboxylate + H(+). Its function is as follows. Involved in the detoxification of xenobiotics and in the activation of ester and amide prodrugs. Involved in the extracellular metabolism of lung surfactant. In Rattus norvegicus (Rat), this protein is Carboxylesterase 1C (Ces1c).